A 149-amino-acid polypeptide reads, in one-letter code: Small ribosomal subunit protein uS13 (149 aa).

Residues 118-149 (GRRHELGLPVRGQRTKSTFRKGSSVGVRRKKR) form a disordered region.

This sequence belongs to the universal ribosomal protein uS13 family. In terms of assembly, part of the 30S ribosomal subunit. Forms a loose heterodimer with protein S19. Forms two bridges to the 50S subunit in the 70S ribosome.

In terms of biological role, located at the top of the head of the 30S subunit, it contacts several helices of the 16S rRNA. In the 70S ribosome it contacts the 23S rRNA (bridge B1a) and protein L5 of the 50S subunit (bridge B1b), connecting the 2 subunits; these bridges are implicated in subunit movement. In Methanothermobacter thermautotrophicus (strain ATCC 29096 / DSM 1053 / JCM 10044 / NBRC 100330 / Delta H) (Methanobacterium thermoautotrophicum), this protein is Small ribosomal subunit protein uS13.